Here is a 259-residue protein sequence, read N- to C-terminus: Type III pantothenate kinase (259 aa).

Residue 6–13 (DAGNTNIV) participates in ATP binding. Substrate is bound by residues tyrosine 100 and 107-110 (GADR). The active-site Proton acceptor is aspartate 109. Aspartate 129 serves as a coordination point for K(+). Threonine 132 is an ATP binding site. Threonine 184 contacts substrate.

This sequence belongs to the type III pantothenate kinase family. As to quaternary structure, homodimer. It depends on NH4(+) as a cofactor. K(+) serves as cofactor.

It localises to the cytoplasm. The catalysed reaction is (R)-pantothenate + ATP = (R)-4'-phosphopantothenate + ADP + H(+). Its pathway is cofactor biosynthesis; coenzyme A biosynthesis; CoA from (R)-pantothenate: step 1/5. In terms of biological role, catalyzes the phosphorylation of pantothenate (Pan), the first step in CoA biosynthesis. This is Type III pantothenate kinase from Clostridium novyi (strain NT).